Here is a 448-residue protein sequence, read N- to C-terminus: Trigger factor (448 aa).

The PPIase FKBP-type domain occupies 172-257 (GDRVTVDFVG…MKKIEWPHLP (86 aa)).

The protein belongs to the FKBP-type PPIase family. Tig subfamily.

It localises to the cytoplasm. The enzyme catalyses [protein]-peptidylproline (omega=180) = [protein]-peptidylproline (omega=0). Involved in protein export. Acts as a chaperone by maintaining the newly synthesized protein in an open conformation. Functions as a peptidyl-prolyl cis-trans isomerase. The protein is Trigger factor of Paraburkholderia phymatum (strain DSM 17167 / CIP 108236 / LMG 21445 / STM815) (Burkholderia phymatum).